The primary structure comprises 285 residues: sn-2 palmitoyl-lipid 9-desaturase (285 aa).

Helical transmembrane passes span Trp-20 to Phe-40 and Ala-44 to Tyr-64. The short motif at His-65–His-70 is the Histidine box-1 element. Residues Tyr-81–Gly-101 traverse the membrane as a helical segment. The Histidine box-2 signature appears at His-102–His-106. The helical transmembrane segment at Ile-169–Phe-189 threads the bilayer. The Histidine box-3 motif lies at His-239–Pro-243.

Belongs to the fatty acid desaturase type 2 family. Fe(2+) serves as cofactor.

It localises to the membrane. It carries out the reaction a 1-acyl-2-hexadecanoyl-glycerolipid + 2 reduced [2Fe-2S]-[ferredoxin] + O2 + 2 H(+) = a 1-acyl-2-[(9Z)-hexadecenoyl]-glycerolipid + 2 oxidized [2Fe-2S]-[ferredoxin] + 2 H2O. It participates in lipid metabolism; fatty acid biosynthesis. Its function is as follows. Desaturase involved in fatty acid biosynthesis. Introduces a double bond at carbon 9 of palmitoyl groups (16:0) attached to the sn-2 position of the glycerol moiety of membrane glycerolipids. The protein is sn-2 palmitoyl-lipid 9-desaturase of Nostoc sp. (strain 36).